The primary structure comprises 971 residues: Isoleucine--tRNA ligase (971 aa).

A 'HIGH' region motif is present at residues 64–74 (PYANGHIHIGH). E602 contacts L-isoleucyl-5'-AMP. The short motif at 643-647 (KMSKS) is the 'KMSKS' region element. K646 provides a ligand contact to ATP.

This sequence belongs to the class-I aminoacyl-tRNA synthetase family. IleS type 1 subfamily. Monomer.

The protein localises to the cytoplasm. The catalysed reaction is tRNA(Ile) + L-isoleucine + ATP = L-isoleucyl-tRNA(Ile) + AMP + diphosphate. Its function is as follows. Catalyzes the attachment of isoleucine to tRNA(Ile). As IleRS can inadvertently accommodate and process structurally similar amino acids such as valine, to avoid such errors it has two additional distinct tRNA(Ile)-dependent editing activities. One activity is designated as 'pretransfer' editing and involves the hydrolysis of activated Val-AMP. The other activity is designated 'posttransfer' editing and involves deacylation of mischarged Val-tRNA(Ile). The protein is Isoleucine--tRNA ligase of Bartonella henselae (strain ATCC 49882 / DSM 28221 / CCUG 30454 / Houston 1) (Rochalimaea henselae).